The sequence spans 261 residues: tRNA U34 carboxymethyltransferase (261 aa).

Residues lysine 25, tryptophan 39, lysine 44, glycine 63, 114–115 (VE), tyrosine 135, and arginine 250 each bind carboxy-S-adenosyl-L-methionine.

This sequence belongs to the class I-like SAM-binding methyltransferase superfamily. CmoB family. As to quaternary structure, homotetramer.

It catalyses the reaction carboxy-S-adenosyl-L-methionine + 5-hydroxyuridine(34) in tRNA = 5-carboxymethoxyuridine(34) in tRNA + S-adenosyl-L-homocysteine + H(+). Functionally, catalyzes carboxymethyl transfer from carboxy-S-adenosyl-L-methionine (Cx-SAM) to 5-hydroxyuridine (ho5U) to form 5-carboxymethoxyuridine (cmo5U) at position 34 in tRNAs. This Helicobacter pylori (strain ATCC 700392 / 26695) (Campylobacter pylori) protein is tRNA U34 carboxymethyltransferase.